Here is a 119-residue protein sequence, read N- to C-terminus: UPF0344 protein lp_1373 (119 aa).

The next 4 helical transmembrane spans lie at 1 to 21, 32 to 52, 60 to 80, and 92 to 112; these read MYLL…AIGL, FLIL…ALAI, WLTL…EVAF, and LVTL…GLHW.

It belongs to the UPF0344 family.

It is found in the cell membrane. The chain is UPF0344 protein lp_1373 from Lactiplantibacillus plantarum (strain ATCC BAA-793 / NCIMB 8826 / WCFS1) (Lactobacillus plantarum).